Reading from the N-terminus, the 58-residue chain is Attractin (58 aa).

3 cysteine pairs are disulfide-bonded: Cys-4-Cys-41, Cys-13-Cys-33, and Cys-20-Cys-26. Asn-8 carries an N-linked (GlcNAc...) asparagine glycan.

Produced by the albumen gland of the egg cordons.

It localises to the secreted. Functionally, water-borne pheromone that attract the marine mollusk Aplysia into breeding aggregations and coordinate male and female reproductive behavior within the aggregation. The polypeptide is Attractin (ATT) (Aplysia fasciata (Mottled sea hare)).